The following is a 283-amino-acid chain: MKQYLELCNRIIDEGTWIENERTGKRCLTVINADLTYNVGNNEFPLITTRKSFWKSAIAEMLGYIRGYDNAADFRALGAKTWDANANENQVWLNNPHRKGVDDMGRVYGVQGRAWSKPDGGTVDQLKKIVDNLKAGVDDRGEILSFYNPGEFHMGCLRPCMHTHNFSLLGDTLYLNSFQRSCDVPLGLNFNQVQVYTLLALIAQITGKKPGMAYHKIVNAHIYEDQLALMRDVQLKREPFEPASLSINPDIKSLEDLETWVTMDDFEVSGYQHHEAIKYPFSV.

Arg-22 provides a ligand contact to dUMP. The Nucleophile role is filled by Cys-160. Residues 180–183 (RSCD), Asn-191, and 221–223 (HIY) each bind dUMP. Asp-183 contributes to the (6R)-5,10-methylene-5,6,7,8-tetrahydrofolate binding site. Ser-282 is a (6R)-5,10-methylene-5,6,7,8-tetrahydrofolate binding site.

The protein belongs to the thymidylate synthase family. Bacterial-type ThyA subfamily. Homodimer.

Its subcellular location is the cytoplasm. The enzyme catalyses dUMP + (6R)-5,10-methylene-5,6,7,8-tetrahydrofolate = 7,8-dihydrofolate + dTMP. It participates in pyrimidine metabolism; dTTP biosynthesis. Functionally, catalyzes the reductive methylation of 2'-deoxyuridine-5'-monophosphate (dUMP) to 2'-deoxythymidine-5'-monophosphate (dTMP) while utilizing 5,10-methylenetetrahydrofolate (mTHF) as the methyl donor and reductant in the reaction, yielding dihydrofolate (DHF) as a by-product. This enzymatic reaction provides an intracellular de novo source of dTMP, an essential precursor for DNA biosynthesis. The polypeptide is Thymidylate synthase (Shewanella sediminis (strain HAW-EB3)).